Consider the following 173-residue polypeptide: Peptide methionine sulfoxide reductase MsrA (173 aa).

The active site involves cysteine 10.

It belongs to the MsrA Met sulfoxide reductase family.

It catalyses the reaction L-methionyl-[protein] + [thioredoxin]-disulfide + H2O = L-methionyl-(S)-S-oxide-[protein] + [thioredoxin]-dithiol. It carries out the reaction [thioredoxin]-disulfide + L-methionine + H2O = L-methionine (S)-S-oxide + [thioredoxin]-dithiol. Functionally, has an important function as a repair enzyme for proteins that have been inactivated by oxidation. Catalyzes the reversible oxidation-reduction of methionine sulfoxide in proteins to methionine. In Psychrobacter cryohalolentis (strain ATCC BAA-1226 / DSM 17306 / VKM B-2378 / K5), this protein is Peptide methionine sulfoxide reductase MsrA.